A 396-amino-acid polypeptide reads, in one-letter code: Protein Njmu-R1 (396 aa).

Positions 1–78 (MLPSLQESMD…SGDDFSLSLA (78 aa)) are disordered. A phosphoserine mark is found at Ser-8 and Ser-18. Residues 9-24 (MDGDEKELESSEEGGS) show a composition bias toward acidic residues. Residues 58-67 (GSPSGTNAET) are compositionally biased toward polar residues.

As to quaternary structure, component of the complex WDR11 composed of C17orf75, FAM91A1 and WDR11; FAM91A1 and WDR11 are required for proper location of the complex. Interacts with TBC1D23; this interaction may be indirect and recruits TBC1D23 to AP-1-derived vesicles. Highly expressed in testis and also expressed in fetal testis.

The protein resides in the golgi apparatus. It localises to the trans-Golgi network. Its subcellular location is the cytoplasmic vesicle. In terms of biological role, as component of the WDR11 complex acts together with TBC1D23 to facilitate the golgin-mediated capture of vesicles generated using AP-1. May have a role in spermatogenesis. The polypeptide is Protein Njmu-R1 (C17orf75) (Homo sapiens (Human)).